Reading from the N-terminus, the 427-residue chain is Protein adenylyltransferase Fic (427 aa).

The chain crosses the membrane as a helical span at residues 17-37 (LLLASLAGLSIAIIVTHAPVF). TPR repeat units follow at residues 77 to 110 (ALAA…APHH) and 111 to 143 (PEIL…NPLD). The Inhibitory (S/T)XXXE(G/N) motif signature appears at 200–205 (SNAIEG). ATP is bound by residues E204 and 286 to 289 (VSDH). The 136-residue stretch at 255 to 390 (ITIDDIIEIH…IRPFIRFVAR (136 aa)) folds into the Fido domain. Residue H333 is part of the active site. Residues 337–344 (DGNGRTAR), 369–370 (YY), and N377 each bind ATP.

Belongs to the fic family. Homodimer.

The protein localises to the membrane. It catalyses the reaction L-tyrosyl-[protein] + ATP = O-(5'-adenylyl)-L-tyrosyl-[protein] + diphosphate. It carries out the reaction L-threonyl-[protein] + ATP = 3-O-(5'-adenylyl)-L-threonyl-[protein] + diphosphate. The enzyme catalyses 3-O-(5'-adenylyl)-L-threonyl-[protein] + H2O = L-threonyl-[protein] + AMP + H(+). With respect to regulation, the side chain of Glu-204 determines which of the two opposing activities (AMPylase or de-AMPylase) will take place. In response to endoplasmic reticulum stress, mediates de-AMPylase activity. Adenylyltransferase activity is inhibited by the inhibitory helix present at the N-terminus: Glu-204 binds ATP and competes with ATP-binding at Arg-344, thereby preventing adenylyltransferase activity. In unstressed cells, disengagement of Glu-204 promotes adenylyltransferase activity. Activation dissociates ATP-binding from Glu-204, allowing ordered binding of the entire ATP moiety with the alpha-phosphate in an orientation that is productive for accepting an incoming target hydroxyl side chain. In terms of biological role, protein that can both mediate the addition of adenosine 5'-monophosphate (AMP) to specific residues of target proteins (AMPylation), and the removal of the same modification from target proteins (de-AMPylation), depending on the context. The side chain of Glu-204 determines which of the two opposing activities (AMPylase or de-AMPylase) will take place. Acts as a key regulator of the unfolded protein response (UPR) by mediating AMPylation or de-AMPylation of Hsc70-3/BiP. In unstressed cells, acts as an adenylyltransferase by mediating AMPylation of Hsc70-3/BiP, thereby inactivating it. In response to endoplasmic reticulum stress, acts as a phosphodiesterase by mediating removal of ATP (de-AMPylation) from Hsc70-3/BiP, leading to restore HSPA5/BiP activity. In Nematostella vectensis (Starlet sea anemone), this protein is Protein adenylyltransferase Fic.